The sequence spans 125 residues: Larval cuticle protein LCP-14 (125 aa).

Residues 1–16 (MKSFIVALCVVGCVLA) form the signal peptide. A Chitin-binding type R&amp;R domain is found at 33–102 (EGSYNYAFES…PQADFLPTPP (70 aa)).

Component of the cuticle of the larva of tobacco hornworm. The polypeptide is Larval cuticle protein LCP-14 (LCP-14) (Manduca sexta (Tobacco hawkmoth)).